Reading from the N-terminus, the 1304-residue chain is Probable inactive serine/threonine-protein kinase fnkC (1304 aa).

The 370-residue stretch at 33 to 402 (FEIIRILKKD…TNLLLTHKFI (370 aa)) folds into the Protein kinase domain. Residues 39–47 (LKKDEFSTT) and lysine 68 contribute to the ATP site. The interval 208-277 (KDNNNNNNNN…EAEGGGGGGE (70 aa)) is disordered. Over residues 210 to 269 (NNNNNNNNNNNNNNNNNNNNNNNNNNNNNNANNSNNNTLNNLSIVNNNSSSSSNDNSSEA) the composition is skewed to low complexity. FNIP repeat units lie at residues 514-556 (HSKS…LGSD), 710-753 (FNQL…FGRC), 754-797 (FNQP…FGSQ), 798-841 (YNQP…FGES), and 900-943 (YNDI…FGCD). MATH domains lie at 1025 to 1154 (QGSW…RIDA) and 1172 to 1291 (NQAF…NVSI).

The protein belongs to the protein kinase superfamily. STE Ser/Thr protein kinase family.

This is Probable inactive serine/threonine-protein kinase fnkC (fnkC) from Dictyostelium discoideum (Social amoeba).